A 219-amino-acid chain; its full sequence is Maleylacetoacetate isomerase (219 aa).

Residues 4–87 (NKTVLYSYWR…YLEETHPENP (84 aa)) form the GST N-terminal domain. Glutathione is bound by residues 14–19 (SSCSWR), Gln-45, 71–72 (QS), Gln-111, and 115–117 (NLK). Residues 92 to 217 (GSYERAIARQ…LPQNQPDAEP (126 aa)) form the GST C-terminal domain.

It belongs to the GST superfamily. Zeta family. Requires glutathione as cofactor.

It carries out the reaction 4-maleylacetoacetate = 4-fumarylacetoacetate. It participates in amino-acid degradation; L-phenylalanine degradation; acetoacetate and fumarate from L-phenylalanine: step 5/6. The protein is Maleylacetoacetate isomerase (mai) of Dictyostelium discoideum (Social amoeba).